We begin with the raw amino-acid sequence, 994 residues long: Valine--tRNA ligase (994 aa).

The 'HIGH' region motif lies at 43-53 (PNVTGTLHMGH). Residues 329 to 345 (QSGMPSGATSDTTNTPS) show a composition bias toward polar residues. Residues 329–355 (QSGMPSGATSDTTNTPSDPEASSAANQ) are disordered. The 'KMSKS' region signature appears at 585–589 (KMSKS). Residue K588 participates in ATP binding. The tract at residues 692 to 714 (AHSPAQHQAGQDGQDAPRTPQPR) is disordered. A compositionally biased stretch (low complexity) spans 696-707 (AQHQAGQDGQDA). A coiled-coil region spans residues 928–994 (LIDVDAERVR…NGLRERRATL (67 aa)).

Belongs to the class-I aminoacyl-tRNA synthetase family. ValS type 1 subfamily. In terms of assembly, monomer.

The protein localises to the cytoplasm. The enzyme catalyses tRNA(Val) + L-valine + ATP = L-valyl-tRNA(Val) + AMP + diphosphate. In terms of biological role, catalyzes the attachment of valine to tRNA(Val). As ValRS can inadvertently accommodate and process structurally similar amino acids such as threonine, to avoid such errors, it has a 'posttransfer' editing activity that hydrolyzes mischarged Thr-tRNA(Val) in a tRNA-dependent manner. This Xylella fastidiosa (strain 9a5c) protein is Valine--tRNA ligase.